The following is a 416-amino-acid chain: 1-deoxy-D-xylulose 5-phosphate reductoisomerase (416 aa).

NADPH-binding residues include Thr-10, Gly-11, Ser-12, Ile-13, Gly-36, Arg-37, Asn-38, and Asn-130. Lys-131 is a 1-deoxy-D-xylulose 5-phosphate binding site. Glu-132 contributes to the NADPH binding site. Asp-156 is a binding site for Mn(2+). 4 residues coordinate 1-deoxy-D-xylulose 5-phosphate: Ser-157, Glu-158, Ser-194, and His-217. Glu-158 contacts Mn(2+). Gly-223 contributes to the NADPH binding site. 4 residues coordinate 1-deoxy-D-xylulose 5-phosphate: Ser-230, Asn-235, Lys-236, and Glu-239. Glu-239 is a Mn(2+) binding site.

The protein belongs to the DXR family. Mg(2+) serves as cofactor. Mn(2+) is required as a cofactor.

The catalysed reaction is 2-C-methyl-D-erythritol 4-phosphate + NADP(+) = 1-deoxy-D-xylulose 5-phosphate + NADPH + H(+). The protein operates within isoprenoid biosynthesis; isopentenyl diphosphate biosynthesis via DXP pathway; isopentenyl diphosphate from 1-deoxy-D-xylulose 5-phosphate: step 1/6. In terms of biological role, catalyzes the NADPH-dependent rearrangement and reduction of 1-deoxy-D-xylulose-5-phosphate (DXP) to 2-C-methyl-D-erythritol 4-phosphate (MEP). The chain is 1-deoxy-D-xylulose 5-phosphate reductoisomerase from Synechococcus sp. (strain CC9311).